A 184-amino-acid polypeptide reads, in one-letter code: ATP-dependent protease subunit HslV (184 aa).

Residue Thr-2 is part of the active site. The Na(+) site is built by Gly-157, Cys-160, and Thr-163.

The protein belongs to the peptidase T1B family. HslV subfamily. As to quaternary structure, a double ring-shaped homohexamer of HslV is capped on each side by a ring-shaped HslU homohexamer. The assembly of the HslU/HslV complex is dependent on binding of ATP.

The protein localises to the cytoplasm. It catalyses the reaction ATP-dependent cleavage of peptide bonds with broad specificity.. With respect to regulation, allosterically activated by HslU binding. Protease subunit of a proteasome-like degradation complex believed to be a general protein degrading machinery. The sequence is that of ATP-dependent protease subunit HslV from Vibrio vulnificus (strain CMCP6).